The following is a 427-amino-acid chain: Enolase 2 (427 aa).

Residue Gln-165 participates in (2R)-2-phosphoglycerate binding. Glu-207 functions as the Proton donor in the catalytic mechanism. The Mg(2+) site is built by Asp-244, Glu-287, and Asp-314. Lys-339, Arg-368, Ser-369, and Lys-390 together coordinate (2R)-2-phosphoglycerate. Catalysis depends on Lys-339, which acts as the Proton acceptor.

This sequence belongs to the enolase family. As to quaternary structure, component of the RNA degradosome, a multiprotein complex involved in RNA processing and mRNA degradation. It depends on Mg(2+) as a cofactor.

It is found in the cytoplasm. The protein resides in the secreted. Its subcellular location is the cell surface. It catalyses the reaction (2R)-2-phosphoglycerate = phosphoenolpyruvate + H2O. Its pathway is carbohydrate degradation; glycolysis; pyruvate from D-glyceraldehyde 3-phosphate: step 4/5. Functionally, catalyzes the reversible conversion of 2-phosphoglycerate (2-PG) into phosphoenolpyruvate (PEP). It is essential for the degradation of carbohydrates via glycolysis. This chain is Enolase 2, found in Pseudomonas syringae pv. syringae (strain B728a).